Reading from the N-terminus, the 355-residue chain is cAMP-dependent protein kinase catalytic subunit PRKX (355 aa).

Methionine 1 carries the N-acetylmethionine modification. The tract at residues 1–42 (MEPPAGAAATVKDPDHDPVKTKVSAPAADPKPRTSSQKAGHS) is disordered. The region spanning 46 to 300 (WDTIATVGTG…AEDIKRHRWF (255 aa)) is the Protein kinase domain. Residues 52 to 60 (VGTGTFGRV) and lysine 75 contribute to the ATP site. Aspartate 169 acts as the Proton acceptor in catalysis. A Phosphothreonine modification is found at threonine 200. Positions 301-355 (RGVEWESVPQRKLKPPIVPKLSGDGDISNFETYPESELDKTPSVSDKDLETFKNF) constitute an AGC-kinase C-terminal domain. Positions 316 to 355 (PIVPKLSGDGDISNFETYPESELDKTPSVSDKDLETFKNF) are disordered. The span at 337–355 (ELDKTPSVSDKDLETFKNF) shows a compositional bias: basic and acidic residues.

This sequence belongs to the protein kinase superfamily. AGC Ser/Thr protein kinase family. cAMP subfamily. In terms of assembly, like other cAMP-dependent protein kinases, the inactive holoenzyme is probably composed of 2 PRKX catalytic subunits and a dimer of regulatory subunits. Interacts (cAMP-dependent) specifically with the regulatory subunits PRKAR1A and PRKAR1B. Compared to other cAMP-dependent serine/threonine protein kinases, does not interact with the 2 other PKA regulatory subunits PRKAR2A and PRKAR2B. Interacts with PIN1 (via WW domain). Interacts with cAMP-dependent protein kinase inhibitor/PKI proteins; inhibits PRKX. Interacts with GPKOW. Interacts with SMAD6. Interacts with PKD1; involved in differentiation and controlled morphogenesis of the kidney. Post-translationally, phosphorylated; autophosphorylates in vitro. In terms of tissue distribution, widely expressed.

It localises to the cytoplasm. The protein resides in the nucleus. It catalyses the reaction L-seryl-[protein] + ATP = O-phospho-L-seryl-[protein] + ADP + H(+). The catalysed reaction is L-threonyl-[protein] + ATP = O-phospho-L-threonyl-[protein] + ADP + H(+). With respect to regulation, binding of cAMP to the PRKAR1A or PRKAR1B regulatory subunits induces dissociation of the holoenzyme heterotetramer. The released monomeric PRKX is then active and able to phosphorylate its substrates. Functionally, serine/threonine protein kinase regulated by and mediating cAMP signaling in cells. Acts through phosphorylation of downstream targets that may include CREB, SMAD6 and PKD1 and has multiple functions in cellular differentiation and epithelial morphogenesis. Regulates myeloid cell differentiation through SMAD6 phosphorylation. Involved in nephrogenesis by stimulating renal epithelial cell migration and tubulogenesis. Also involved in angiogenesis through stimulation of endothelial cell proliferation, migration and vascular-like structure formation. In Mus musculus (Mouse), this protein is cAMP-dependent protein kinase catalytic subunit PRKX (Prkx).